Reading from the N-terminus, the 352-residue chain is MKRYPTKKIFVGDVAVGGDAPISVQSMTFSKTADVEATVEQINRLHFAGADIVRVAVPEEEDAKALKEIKKRTSLPLVADIHFNYRLALIAAEVVDCIRINPGNIGSKERIKEVVKACKERNIPIRIGVNAGSLEKEIEAKYGATSEAMVQSALYHIKLLEDLDFTDIKVSMKASDVERTVEAYRKLRPLVPYPFHLGVTEAGTVFHATIKSAIGIGALLLEGIGDTIRVSITGELEKEIEVGRAIIKDAGRASEGLNIISCPTCGRIEADLVKAVAEVEEKTKHIKTPLNVSVMGCVVNAIGEAKHADVAIAYGKGSGLIMVKGEVVAKLPENKLVDRFLQEVQKLAKEKE.

Residues C262, C265, C297, and E304 each contribute to the [4Fe-4S] cluster site.

The protein belongs to the IspG family. Requires [4Fe-4S] cluster as cofactor.

It catalyses the reaction (2E)-4-hydroxy-3-methylbut-2-enyl diphosphate + oxidized [flavodoxin] + H2O + 2 H(+) = 2-C-methyl-D-erythritol 2,4-cyclic diphosphate + reduced [flavodoxin]. Its pathway is isoprenoid biosynthesis; isopentenyl diphosphate biosynthesis via DXP pathway; isopentenyl diphosphate from 1-deoxy-D-xylulose 5-phosphate: step 5/6. Its function is as follows. Converts 2C-methyl-D-erythritol 2,4-cyclodiphosphate (ME-2,4cPP) into 1-hydroxy-2-methyl-2-(E)-butenyl 4-diphosphate. The sequence is that of 4-hydroxy-3-methylbut-2-en-1-yl diphosphate synthase (flavodoxin) from Nitratiruptor sp. (strain SB155-2).